Consider the following 208-residue polypeptide: Recombination protein RecR (208 aa).

The C4-type zinc finger occupies 60 to 75; it reads CKVCHNICDDEVCSIC. The 96-residue stretch at 83-178 folds into the Toprim domain; that stretch reads SLVCVVENIK…RISVIARGVS (96 aa).

Belongs to the RecR family.

Functionally, may play a role in DNA repair. It seems to be involved in an RecBC-independent recombinational process of DNA repair. It may act with RecF and RecO. This chain is Recombination protein RecR, found in Parabacteroides distasonis (strain ATCC 8503 / DSM 20701 / CIP 104284 / JCM 5825 / NCTC 11152).